The following is a 279-amino-acid chain: Probable endonuclease 4 (279 aa).

Positions 66, 106, 142, 175, 178, 212, 225, 227, and 257 each coordinate Zn(2+).

The protein belongs to the AP endonuclease 2 family. The cofactor is Zn(2+).

The enzyme catalyses Endonucleolytic cleavage to 5'-phosphooligonucleotide end-products.. In terms of biological role, endonuclease IV plays a role in DNA repair. It cleaves phosphodiester bonds at apurinic or apyrimidinic (AP) sites, generating a 3'-hydroxyl group and a 5'-terminal sugar phosphate. This Moorella thermoacetica (strain ATCC 39073 / JCM 9320) protein is Probable endonuclease 4.